The primary structure comprises 178 residues: Dual-action ribosomal maturation protein DarP (178 aa).

The protein belongs to the DarP family.

The protein localises to the cytoplasm. In terms of biological role, member of a network of 50S ribosomal subunit biogenesis factors which assembles along the 30S-50S interface, preventing incorrect 23S rRNA structures from forming. Promotes peptidyl transferase center (PTC) maturation. The chain is Dual-action ribosomal maturation protein DarP from Mannheimia succiniciproducens (strain KCTC 0769BP / MBEL55E).